Consider the following 85-residue polypeptide: U4-theraphotoxin-Hhn1w (85 aa).

The signal sequence occupies residues 1 to 22 (MKVTLIAILTCAAVLALHTTAA). A propeptide spanning residues 23–48 (EELEAESQLMEVGMPDTELAAVDEER) is cleaved from the precursor. 3 disulfides stabilise this stretch: Cys52–Cys66, Cys56–Cys77, and Cys71–Cys82.

It belongs to the neurotoxin 12 (Hwtx-2) family. 02 (Hwtx-2) subfamily. Expressed by the venom gland.

It is found in the secreted. Postsynaptic neurotoxin. The protein is U4-theraphotoxin-Hhn1w of Cyriopagopus hainanus (Chinese bird spider).